The sequence spans 605 residues: Terpenoid synthase 18 (605 aa).

Mg(2+) is bound by residues Asp-356, Asp-360, Asn-500, Thr-504, and Glu-508. The DDXXD motif signature appears at 356–360 (DDTYD).

This sequence belongs to the terpene synthase family. Tpsa subfamily. The cofactor is Mg(2+). Mn(2+) serves as cofactor. In terms of tissue distribution, predominantly expressed in flowers and siliques but also in roots and leaves.

The protein localises to the cytoplasm. Its pathway is secondary metabolite biosynthesis; terpenoid biosynthesis. The polypeptide is Terpenoid synthase 18 (TPS18) (Arabidopsis thaliana (Mouse-ear cress)).